Here is a 163-residue protein sequence, read N- to C-terminus: Nucleotide-binding protein Mflv_5248 (163 aa).

The protein belongs to the YajQ family.

Its function is as follows. Nucleotide-binding protein. The sequence is that of Nucleotide-binding protein Mflv_5248 from Mycolicibacterium gilvum (strain PYR-GCK) (Mycobacterium gilvum (strain PYR-GCK)).